Here is a 147-residue protein sequence, read N- to C-terminus: Globin (147 aa).

The 147-residue stretch at 1–147 folds into the Globin domain; sequence GLSAEQKTAL…LLGVLIENHQ (147 aa). Positions 66 and 98 each coordinate heme b.

This sequence belongs to the globin family. In terms of assembly, homodimer.

The sequence is that of Globin from Tritia mutabilis (Sea snail).